Reading from the N-terminus, the 117-residue chain is Large ribosomal subunit protein bL20 (117 aa).

It belongs to the bacterial ribosomal protein bL20 family.

Functionally, binds directly to 23S ribosomal RNA and is necessary for the in vitro assembly process of the 50S ribosomal subunit. It is not involved in the protein synthesizing functions of that subunit. The protein is Large ribosomal subunit protein bL20 of Thermomicrobium roseum (strain ATCC 27502 / DSM 5159 / P-2).